The primary structure comprises 309 residues: Formimidoylglutamase (309 aa).

Mn(2+) is bound by residues His-120, Asp-145, His-147, Asp-149, Asp-236, and Asp-238.

The protein belongs to the arginase family. It depends on Mn(2+) as a cofactor.

The enzyme catalyses N-formimidoyl-L-glutamate + H2O = formamide + L-glutamate. Its pathway is amino-acid degradation; L-histidine degradation into L-glutamate; L-glutamate from N-formimidoyl-L-glutamate (hydrolase route): step 1/1. In terms of biological role, catalyzes the conversion of N-formimidoyl-L-glutamate to L-glutamate and formamide. This is Formimidoylglutamase from Chromobacterium violaceum (strain ATCC 12472 / DSM 30191 / JCM 1249 / CCUG 213 / NBRC 12614 / NCIMB 9131 / NCTC 9757 / MK).